Consider the following 143-residue polypeptide: Large ribosomal subunit protein uL11 (143 aa).

This sequence belongs to the universal ribosomal protein uL11 family. Part of the ribosomal stalk of the 50S ribosomal subunit. Interacts with L10 and the large rRNA to form the base of the stalk. L10 forms an elongated spine to which L12 dimers bind in a sequential fashion forming a multimeric L10(L12)X complex. Post-translationally, one or more lysine residues are methylated.

In terms of biological role, forms part of the ribosomal stalk which helps the ribosome interact with GTP-bound translation factors. The chain is Large ribosomal subunit protein uL11 from Cutibacterium acnes (strain DSM 16379 / KPA171202) (Propionibacterium acnes).